The chain runs to 762 residues: MGCCFSVQFSFDDQTLVRIFNFLCGNINRNSFGVEERPTQPTIGQEEMLEKAWNRLMEDRVGIMGLHGMGGVGKTTLFKKIHNKFAKMSSRFDIVIWIVVSKGAKLSKLQEDIAEKLHLCDDLWKNKNESDKATDIHRVLKGKRFVLMLDDIWEKVDLEAIGVPYPSEVNKCKVAFTTRDQKVCGEMGDHKPMQVKCLEPEDAWELFKNKVGDNTLRSDPVIVELAREVAQKCRGLPLALSVIGETMASKTMVQEWEHAIDVLTRSAAEFSNMGNKILPILKYSYDSLGDEHIKSCFLYCALFPEDDEIYNEKLIDYWICEGFIGEDQVIKRARNKGYEMLGTLTLANLLTKVGTEHVVMHDVVREMALWIASDFGKQKENFVVRARVGLHERPEAKDWGAVRRMSLMDNHIEEITCESKCSELTTLFLQSNQLKNLSGEFIRYMQKLVVLDLSYNRDFNKLPEQISGLVSLQFLDLSNTSIKQLPVGLKKLKKLTFLNLAYTVRLCSISGISRLLSLRLLRLLGSKVHGDASVLKELQKLQNLQHLAITLSAELSLNQRLANLISILGIEGFLQKPFDLSFLASMENLSSLWVKNSYFSEIKCRESETASSYLRINPKIPCFTNLSRLGLSKCHSIKDLTWILFAPNLVYLYIEDSREVGEIINKEKATNLTSITPFLKLERLILYNLPKLESIYWSPLHFPRLLIIHVLDCPKLRKLPLNATSVPLVEEFQIRMYPPGLGNELEWEDEDTKNRFVLSIKK.

The N-myristoyl glycine moiety is linked to residue Gly2. 2 S-palmitoyl cysteine lipidation sites follow: Cys3 and Cys4. An NB-ARC domain is found at 26-329 (NINRNSFGVE…CEGFIGEDQV (304 aa)). Residue 68 to 75 (GMGGVGKT) participates in ATP binding. LRR repeat units lie at residues 401 to 422 (AVRR…SKCS), 423 to 444 (ELTT…FIRY), 447 to 470 (KLVV…SGLV), 471 to 493 (SLQF…KKLK), and 494 to 516 (KLTF…SRLL).

This sequence belongs to the disease resistance NB-LRR family.

Its subcellular location is the cell membrane. In terms of biological role, probable disease resistance protein. The polypeptide is Probable disease resistance protein At1g61300 (Arabidopsis thaliana (Mouse-ear cress)).